The chain runs to 185 residues: Ribosome-recycling factor (185 aa).

The protein belongs to the RRF family.

It localises to the cytoplasm. Responsible for the release of ribosomes from messenger RNA at the termination of protein biosynthesis. May increase the efficiency of translation by recycling ribosomes from one round of translation to another. This is Ribosome-recycling factor from Neorickettsia sennetsu (strain ATCC VR-367 / Miyayama) (Ehrlichia sennetsu).